The following is a 146-amino-acid chain: Large ribosomal subunit protein uL15 (146 aa).

The segment at 1–51 is disordered; that stretch reads MKLHELQPAPGSRKKAVRVGRGIGSGNGKTSGRGQKGQNARSGGGVRLGFE. Composition is skewed to gly residues over residues 21-35 and 42-51; these read RGIG…GRGQ and SGGGVRLGFE.

It belongs to the universal ribosomal protein uL15 family. As to quaternary structure, part of the 50S ribosomal subunit.

Functionally, binds to the 23S rRNA. The protein is Large ribosomal subunit protein uL15 of Geobacillus kaustophilus (strain HTA426).